Reading from the N-terminus, the 291-residue chain is Bifunctional protein FolD (291 aa).

NADP(+) contacts are provided by residues 166-168, I191, and I232; that span reads GAG.

The protein belongs to the tetrahydrofolate dehydrogenase/cyclohydrolase family. As to quaternary structure, homodimer.

It catalyses the reaction (6R)-5,10-methylene-5,6,7,8-tetrahydrofolate + NADP(+) = (6R)-5,10-methenyltetrahydrofolate + NADPH. The catalysed reaction is (6R)-5,10-methenyltetrahydrofolate + H2O = (6R)-10-formyltetrahydrofolate + H(+). The protein operates within one-carbon metabolism; tetrahydrofolate interconversion. Catalyzes the oxidation of 5,10-methylenetetrahydrofolate to 5,10-methenyltetrahydrofolate and then the hydrolysis of 5,10-methenyltetrahydrofolate to 10-formyltetrahydrofolate. In Aquifex aeolicus (strain VF5), this protein is Bifunctional protein FolD.